The sequence spans 330 residues: Adenylate isopentenyltransferase 5, chloroplastic (330 aa).

Residues 1–39 (MKPCMTALRQVIQPLSLNFQGNMVDVPFFRRKDKVVFVM) constitute a chloroplast transit peptide. An ATP-binding site is contributed by 40-47 (GATGTGKS).

It belongs to the IPP transferase family. In terms of tissue distribution, expressed in root primordia, columella root caps, upper part of young inflorescences, and fruit abscission zones.

The protein resides in the plastid. It localises to the chloroplast. The enzyme catalyses dimethylallyl diphosphate + ADP = N(6)-(dimethylallyl)adenosine 5'-diphosphate + diphosphate. It carries out the reaction dimethylallyl diphosphate + ATP = N(6)-(dimethylallyl)adenosine 5'-triphosphate + diphosphate. Involved in cytokinin biosynthesis. Catalyzes the transfer of an isopentenyl group from dimethylallyl diphosphate (DMAPP) to ATP and ADP. The protein is Adenylate isopentenyltransferase 5, chloroplastic (IPT5) of Arabidopsis thaliana (Mouse-ear cress).